Reading from the N-terminus, the 135-residue chain is Galectin-1 (135 aa).

Position 2 is an N-acetylalanine (Ala-2). Residues 4–135 enclose the Galectin domain; sequence GLVASNLNLK…DFKIKCVAFE (132 aa). Residues Lys-13, Lys-19, and Lys-29 each carry the N6-acetyllysine modification. A Phosphoserine modification is found at Ser-30. Residues 45–49, His-53, Asn-62, and 69–72 each bind a beta-D-galactoside; these read HFNPR and WGTE. Lys-108 bears the N6-acetyllysine; alternate mark. Position 108 is an N6-succinyllysine; alternate (Lys-108). Lys-128 carries the N6-acetyllysine modification.

As to quaternary structure, binds LGALS3BP. Interacts with CD2, CD3, CD4, CD6, CD7, CD43, ALCAM and CD45. Interacts with laminin. Interacts with SUSD2. Exists in a reversible and active monomer-homodimer equilibrium, the mononomer/dimer state is regulated by lectin concentration. Interacts with cargo receptor TMED10; the interaction mediates the translocation from the cytoplasm into the ERGIC (endoplasmic reticulum-Golgi intermediate compartment) and thereby secretion.

The protein resides in the cytoplasm. Its subcellular location is the secreted. It localises to the extracellular space. It is found in the extracellular matrix. Functionally, lectin that binds beta-galactoside and a wide array of complex carbohydrates. Plays a role in regulating apoptosis, cell proliferation and cell differentiation. Inhibits CD45 protein phosphatase activity and therefore the dephosphorylation of Lyn kinase. Strong inducer of T-cell apoptosis. This is Galectin-1 (LGALS1) from Cricetulus griseus (Chinese hamster).